The following is a 366-amino-acid chain: MWPRSHRHLCLAFLLVCVLSAISFLIHFHQDSIRHGLGLSVLCPDRRLVTPAVAIFCLPGTPMSPNTSSSCPQHPASLSGTWTIYPDGRFGNQMGQYATLLALAQLNGRRAFILPAMHAALAPVFRITLPVLAPEVDSRTPWQELRLHDWMSEEYADLGDPFLKLSGFPCSWTFFHHLREQIRSEFTLHDHLREEAQSVLRRLRLGRSGARPRTFVGVHVRRGDYLQVMPQRWKGVVANSAYLREAMDWFRARHEAPVFVVTSNGMEWCRENIDASKGDVMFAGDGQEASPWKDFALLTQCNHTIMTIGTFGFWAAYLAGGDTVYLANFTLPDSEFLKIFKPEAAFLPEWVGINADLSPLWPLAEP.

Residues 1 to 8 are Cytoplasmic-facing; sequence MWPRSHRH. The chain crosses the membrane as a helical; Signal-anchor for type II membrane protein span at residues 9 to 25; it reads LCLAFLLVCVLSAISFL. At 26 to 366 the chain is on the lumenal side; sequence IHFHQDSIRH…LSPLWPLAEP (341 aa). Residues asparagine 66, asparagine 302, and asparagine 328 are each glycosylated (N-linked (GlcNAc...) asparagine).

Belongs to the glycosyltransferase 11 family.

The protein localises to the golgi apparatus. Its subcellular location is the golgi stack membrane. It carries out the reaction a beta-D-galactosyl-(1-&gt;4)-N-acetyl-beta-D-glucosaminyl derivative + GDP-beta-L-fucose = an alpha-L-Fuc-(1-&gt;2)-beta-D-Gal-(1-&gt;4)-beta-D-GlcNAc derivative + GDP + H(+). The enzyme catalyses a ganglioside GA1 + GDP-beta-L-fucose = a ganglioside Fuc-GA1 + GDP + H(+). It catalyses the reaction a beta-D-Gal-(1-&gt;3)-beta-D-GlcNAc-(1-&gt;3)-beta-D-Gal-(1-&gt;4)-beta-D-Glc-(1&lt;-&gt;1')-Cer(d18:1(4E)) + GDP-beta-L-fucose = alpha-L-fucosyl-(1-&gt;2)- beta-D-galactosyl-(1-&gt;3)-N-acetyl-beta-D-glucosaminyl-(1-&gt;3)-beta-D-galactosyl-(1-&gt;4)-beta-D-glucosyl-(1&lt;-&gt;1')-N-acylsphing-4-enine + GDP + H(+). The catalysed reaction is a neolactoside nLc4Cer(d18:1(4E)) + GDP-beta-L-fucose = a neolactoside IV(2)-alpha-Fuc-nLc4Cer(d18:1(4E)) + GDP + H(+). It carries out the reaction a ganglioside GM1 + GDP-beta-L-fucose = a ganglioside Fuc-GM1 + GDP + H(+). The enzyme catalyses beta-D-galactosyl-(1-&gt;3)-N-acetyl-D-galactosamine + GDP-beta-L-fucose = alpha-L-fucosyl-(1-&gt;2)-beta-D-galactosyl-(1-&gt;3)-N-acetyl-D-galactosamine + GDP + H(+). It functions in the pathway protein modification; protein glycosylation. In terms of biological role, catalyzes the transfer of L-fucose, from a guanosine diphosphate-beta-L-fucose, to the terminal galactose residue of glycoconjugates through an alpha(1,2) linkage leading to H antigen synthesis that is an intermediate substrate in the synthesis of ABO blood group antigens. H antigen is essential for maturation of the glomerular layer of the main olfactory bulb, in cell migration and early cell-cell contacts during tumor associated angiogenesis. Preferentially fucosylates soluble lactose and to a lesser extent fucosylates glycolipids gangliosides GA1 and GM1a. In Saimiri boliviensis boliviensis (Bolivian squirrel monkey), this protein is Galactoside alpha-(1,2)-fucosyltransferase 1.